Here is a 583-residue protein sequence, read N- to C-terminus: MMEDQQSLHSFISDYDQRSHAVEKYDGPDLSEVDSEDNDKMIKTNEDEAVKEPIYRTRSNQTEPDIANAPPYSRFDAKYKMALVLQCAYTGLFSTMAGAIYYPVLSVIEKQFHITEELVNITVVVYFIFQGIAPTLMGGLADSLGRRPVVLFAVTVYFGACIGLACAQTYAQIVVLRCLQAAGISPVIAINSGIIGDVTTRAERGGYVGYISGFQVLGSAFGALIGAGLSSRWGWRSIFWFLAIGSGVCLVFSIIMLPETKRTIVGNGSVTPRNYLNRAPLLMFPLIRRKLHLDDPEYETLEPRTQLSLLAPLSILKVKEISILLVTAGIQFATWSTHQTALSTVLSKNYHLSVAKIGLCYLPTGICTLISIVTSGRYLNWSYRRRFAKHKVWLKEQEEILVKENGYSREEVQNIINNDPKYVFNLVQTRLHAAFVTLLLSSSGFVAFGWCIDVKAPLASVLVMSGFASLFSNCILTFSTTLIVDIFPSKTSTATGCLNLFRCLLSALFIGCLSKMATSMTYGGVFTFLGALTALSACPLFYLLKNGREITLKRKRKEDASRAFALSVANEKAEAEGKAEESR.

The disordered stretch occupies residues 23–46 (EKYDGPDLSEVDSEDNDKMIKTNE). The N-linked (GlcNAc...) asparagine glycan is linked to N60. Residues 88-108 (AYTGLFSTMAGAIYYPVLSVI) traverse the membrane as a helical segment. N120 is a glycosylation site (N-linked (GlcNAc...) asparagine). Transmembrane regions (helical) follow at residues 121–141 (ITVV…GGLA), 148–168 (PVVL…ACAQ), 178–198 (CLQA…IGDV), 208–228 (VGYI…IGAG), and 238–258 (IFWF…IMLP). A glycan (N-linked (GlcNAc...) asparagine) is linked at N267. The next 2 membrane-spanning stretches (helical) occupy residues 323–342 (ILLV…QTAL) and 354–374 (VAKI…SIVT). N-linked (GlcNAc...) asparagine glycosylation occurs at N380. Helical transmembrane passes span 432–452 (HAAF…GWCI), 458–478 (LASV…ILTF), 493–513 (TATG…IGCL), and 524–544 (GVFT…FYLL).

The protein belongs to the major facilitator superfamily. CAR1 family.

The protein resides in the cell membrane. Functionally, multidrug resistance transporter involved in resistance to the antifungal drugs miconazole, tioconazole, clotrimazole, and ketoconazole; as well as to quinidine. Decreases the intracellular accumulation of clotrimazole in and plays a role in the extrusion of this antifungal from preloaded cells. The sequence is that of Multidrug transporter QDR2 from Candida glabrata (strain ATCC 2001 / BCRC 20586 / JCM 3761 / NBRC 0622 / NRRL Y-65 / CBS 138) (Yeast).